The sequence spans 171 residues: 3-hydroxydecanoyl-[acyl-carrier-protein] dehydratase (171 aa).

Residue His-70 is part of the active site.

Belongs to the thioester dehydratase family. FabA subfamily. In terms of assembly, homodimer.

The protein localises to the cytoplasm. The catalysed reaction is a (3R)-hydroxyacyl-[ACP] = a (2E)-enoyl-[ACP] + H2O. The enzyme catalyses (3R)-hydroxydecanoyl-[ACP] = (2E)-decenoyl-[ACP] + H2O. It carries out the reaction (2E)-decenoyl-[ACP] = (3Z)-decenoyl-[ACP]. The protein operates within lipid metabolism; fatty acid biosynthesis. Its function is as follows. Necessary for the introduction of cis unsaturation into fatty acids. Catalyzes the dehydration of (3R)-3-hydroxydecanoyl-ACP to E-(2)-decenoyl-ACP and then its isomerization to Z-(3)-decenoyl-ACP. Can catalyze the dehydratase reaction for beta-hydroxyacyl-ACPs with saturated chain lengths up to 16:0, being most active on intermediate chain length. The protein is 3-hydroxydecanoyl-[acyl-carrier-protein] dehydratase of Xanthomonas campestris pv. campestris (strain 8004).